The primary structure comprises 172 residues: Large ribosomal subunit protein uL10 (172 aa).

This sequence belongs to the universal ribosomal protein uL10 family. Part of the ribosomal stalk of the 50S ribosomal subunit. The N-terminus interacts with L11 and the large rRNA to form the base of the stalk. The C-terminus forms an elongated spine to which L12 dimers bind in a sequential fashion forming a multimeric L10(L12)X complex.

Its function is as follows. Forms part of the ribosomal stalk, playing a central role in the interaction of the ribosome with GTP-bound translation factors. This is Large ribosomal subunit protein uL10 from Rhodopseudomonas palustris (strain BisA53).